The sequence spans 100 residues: Urease subunit gamma (100 aa).

The protein belongs to the urease gamma subunit family. As to quaternary structure, heterotrimer of UreA (gamma), UreB (beta) and UreC (alpha) subunits. Three heterotrimers associate to form the active enzyme.

The protein resides in the cytoplasm. The catalysed reaction is urea + 2 H2O + H(+) = hydrogencarbonate + 2 NH4(+). It functions in the pathway nitrogen metabolism; urea degradation; CO(2) and NH(3) from urea (urease route): step 1/1. This chain is Urease subunit gamma, found in Chelativorans sp. (strain BNC1).